A 228-amino-acid polypeptide reads, in one-letter code: Ankyrin repeat domain-containing protein 46 (228 aa).

ANK repeat units follow at residues 11–40, 44–73, 77–103, and 107–138; these read QTNV…DPNI, RGRT…DLLA, QGNT…KIDI, and QGAT…EVKG. A helical membrane pass occupies residues 195–215; it reads VLLLIFVIALLSLGIAYYVSG.

The protein localises to the membrane. The chain is Ankyrin repeat domain-containing protein 46 (ANKRD46) from Bos taurus (Bovine).